We begin with the raw amino-acid sequence, 986 residues long: Ephrin type-A receptor 4 (986 aa).

An N-terminal signal peptide occupies residues 1–19 (MAGVPVGALLPLLVGVCGA). The Extracellular portion of the chain corresponds to 20–547 (VTGSRVYPAN…PIIGDGTNPT (528 aa)). An Eph LBD domain is found at 30 to 209 (EVTLLDSRSV…FYKKCPLTVR (180 aa)). N-linked (GlcNAc...) asparagine glycans are attached at residues asparagine 235, asparagine 340, and asparagine 408. Fibronectin type-III domains follow at residues 328 to 439 (PPSA…TNQA) and 440 to 537 (APSP…TVPS). Residues 548–569 (VLLVSVAGSVVLVVILIAAFVI) traverse the membrane as a helical segment. Residues 570–986 (SRRRSKYSKA…QQMHGRMVPV (417 aa)) lie on the Cytoplasmic side of the membrane. Tyrosine 596 and tyrosine 602 each carry phosphotyrosine; by autocatalysis. The Protein kinase domain maps to 621 to 882 (IKIEKVIGVG…QIVNMLDKLI (262 aa)). ATP contacts are provided by residues 627-635 (IGVGEFGEV) and lysine 653. Catalysis depends on aspartate 746, which acts as the Proton acceptor. A phosphotyrosine; by autocatalysis mark is found at tyrosine 779 and tyrosine 928. One can recognise an SAM domain in the interval 911-975 (SAVVSVSDWL…LSSVQAMRSQ (65 aa)). Positions 984-986 (VPV) match the PDZ-binding motif.

It belongs to the protein kinase superfamily. Tyr protein kinase family. Ephrin receptor subfamily. As to quaternary structure, interacts with the src family kinase, p59-Fyn, through the major phosphorylation site at position Tyr-602. Interacts (via PDZ motif) with SIPA1L1 (via PDZ domain); controls neuronal morphology through regulation of the RAP1 (RAP1A or RAP1B) and RAP2 (RAP2A, RAP2B or RAP2C) GTPases. In terms of tissue distribution, expressed at high levels in brain, with expression also detected in the kidney, lung, muscle and thymus.

It is found in the cell membrane. The protein resides in the early endosome. The enzyme catalyses L-tyrosyl-[protein] + ATP = O-phospho-L-tyrosyl-[protein] + ADP + H(+). Receptor tyrosine kinase which binds membrane-bound ephrin family ligands residing on adjacent cells, leading to contact-dependent bidirectional signaling into neighboring cells. The signaling pathway downstream of the receptor is referred to as forward signaling while the signaling pathway downstream of the ephrin ligand is referred to as reverse signaling. Highly promiscuous, it has the unique property among Eph receptors to bind and to be physiologically activated by both GPI-anchored ephrin-A and transmembrane ephrin-B ligands including EFNA1 and EFNB3. Upon activation by ephrin ligands, modulates cell morphology and integrin-dependent cell adhesion through regulation of the Rac, Rap and Rho GTPases activity. Plays an important role in the development of the nervous system controlling different steps of axonal guidance including the establishment of the corticospinal projections. The chain is Ephrin type-A receptor 4 (EPHA4) from Gallus gallus (Chicken).